A 194-amino-acid chain; its full sequence is Holliday junction branch migration complex subunit RuvA (194 aa).

The interval 1–64 (MIGRLRGVLT…DDSAALYGFL (64 aa)) is domain I. Positions 65 to 140 (SESERRLFRH…RAADFNNGIS (76 aa)) are domain II. Positions 140-144 (STSGK) are flexible linker. Residues 145–194 (LNLDTVSEAALALQQLGYKPAEAARMARDAGTESDDVAIVIKKALQTVLR) form a domain III region.

It belongs to the RuvA family. As to quaternary structure, homotetramer. Forms an RuvA(8)-RuvB(12)-Holliday junction (HJ) complex. HJ DNA is sandwiched between 2 RuvA tetramers; dsDNA enters through RuvA and exits via RuvB. An RuvB hexamer assembles on each DNA strand where it exits the tetramer. Each RuvB hexamer is contacted by two RuvA subunits (via domain III) on 2 adjacent RuvB subunits; this complex drives branch migration. In the full resolvosome a probable DNA-RuvA(4)-RuvB(12)-RuvC(2) complex forms which resolves the HJ.

It localises to the cytoplasm. Functionally, the RuvA-RuvB-RuvC complex processes Holliday junction (HJ) DNA during genetic recombination and DNA repair, while the RuvA-RuvB complex plays an important role in the rescue of blocked DNA replication forks via replication fork reversal (RFR). RuvA specifically binds to HJ cruciform DNA, conferring on it an open structure. The RuvB hexamer acts as an ATP-dependent pump, pulling dsDNA into and through the RuvAB complex. HJ branch migration allows RuvC to scan DNA until it finds its consensus sequence, where it cleaves and resolves the cruciform DNA. The sequence is that of Holliday junction branch migration complex subunit RuvA from Xylella fastidiosa (strain M23).